A 522-amino-acid chain; its full sequence is WEB family protein At2g38370 (522 aa).

The segment at 1–32 is disordered; that stretch reads MAEFPEPGTVNPDSDLSNGRAEKPEIDTSAPF. Coiled coils occupy residues 77–264 and 299–376; these read ELQR…AARE and ARSA…RSEN. Disordered regions lie at residues 374–397 and 458–493; these read SENG…SRRE and MSLG…RKRK. Positions 473-486 are enriched in basic and acidic residues; sequence TVSKRSEGKENEKR.

It belongs to the WEB family.

This is WEB family protein At2g38370 from Arabidopsis thaliana (Mouse-ear cress).